We begin with the raw amino-acid sequence, 792 residues long: Phenylalanine--tRNA ligase beta subunit (792 aa).

In terms of domain architecture, tRNA-binding spans 39–154 (LYSFASVITA…EATPLGEDLA (116 aa)). The B5 domain occupies 403–480 (RELKEVALRP…ESWNIETQNP (78 aa)). Mg(2+) is bound by residues Asp-456, Asp-462, Glu-465, and Glu-466. The region spanning 695 to 791 (AIYPSSFRDL…LLTDTKGTIN (97 aa)) is the FDX-ACB domain.

The protein belongs to the phenylalanyl-tRNA synthetase beta subunit family. Type 1 subfamily. In terms of assembly, tetramer of two alpha and two beta subunits. Requires Mg(2+) as cofactor.

The protein resides in the cytoplasm. The enzyme catalyses tRNA(Phe) + L-phenylalanine + ATP = L-phenylalanyl-tRNA(Phe) + AMP + diphosphate + H(+). This Chlamydia pneumoniae (Chlamydophila pneumoniae) protein is Phenylalanine--tRNA ligase beta subunit (pheT).